We begin with the raw amino-acid sequence, 138 residues long: MAQKLKLEMVTPAAQVLSEEVDEIAAPGSLGQFGVLPGHTPLLTTLQVGEFSYRKGSDVYYLAVNWGYVEVAEDRVLVLVETAETQDHIDLARAKAALGRAEARLRELTPADKEYHNMQAALQRAMVRIQVAGRGGRG.

It belongs to the ATPase epsilon chain family. F-type ATPases have 2 components, CF(1) - the catalytic core - and CF(0) - the membrane proton channel. CF(1) has five subunits: alpha(3), beta(3), gamma(1), delta(1), epsilon(1). CF(0) has three main subunits: a, b and c.

Its subcellular location is the cell inner membrane. Produces ATP from ADP in the presence of a proton gradient across the membrane. This chain is ATP synthase epsilon chain 2, found in Syntrophotalea carbinolica (strain DSM 2380 / NBRC 103641 / GraBd1) (Pelobacter carbinolicus).